The following is a 738-amino-acid chain: Alanine--tRNA ligase (738 aa).

Positions 564, 568, 666, and 670 each coordinate Zn(2+).

This sequence belongs to the class-II aminoacyl-tRNA synthetase family. In terms of assembly, homotetramer. It depends on Zn(2+) as a cofactor.

It is found in the cytoplasm. It carries out the reaction tRNA(Ala) + L-alanine + ATP = L-alanyl-tRNA(Ala) + AMP + diphosphate. Its function is as follows. Catalyzes the attachment of alanine to tRNA(Ala) in a two-step reaction: alanine is first activated by ATP to form Ala-AMP and then transferred to the acceptor end of tRNA(Ala). Also edits incorrectly charged Ser-tRNA(Ala) and Gly-tRNA(Ala) via its editing domain. This chain is Alanine--tRNA ligase (alaS), found in Yersinia pestis bv. Antiqua (strain Antiqua).